The following is a 229-amino-acid chain: Protein AF_2251 (229 aa).

The protein belongs to the CinA family.

The polypeptide is Protein AF_2251 (Archaeoglobus fulgidus (strain ATCC 49558 / DSM 4304 / JCM 9628 / NBRC 100126 / VC-16)).